The following is a 679-amino-acid chain: UvrABC system protein B (679 aa).

The region spanning 25 to 176 (KGVNTGKEFQ…NLRSYLRSLV (152 aa)) is the Helicase ATP-binding domain. 38-45 (GATGTGKT) serves as a coordination point for ATP. A Beta-hairpin motif is present at residues 91 to 114 (YYDYYQPEAYVPVSDTYIAKTASI). The Helicase C-terminal domain occupies 429–583 (QIEDLLSEIR…KKYNQVNGIT (155 aa)). The UVR domain occupies 639-674 (PDLIEKLEIKMKDAAKELNFEEAANLRDRIKKLRQK).

This sequence belongs to the UvrB family. As to quaternary structure, forms a heterotetramer with UvrA during the search for lesions. Interacts with UvrC in an incision complex.

Its subcellular location is the cytoplasm. Its function is as follows. The UvrABC repair system catalyzes the recognition and processing of DNA lesions. A damage recognition complex composed of 2 UvrA and 2 UvrB subunits scans DNA for abnormalities. Upon binding of the UvrA(2)B(2) complex to a putative damaged site, the DNA wraps around one UvrB monomer. DNA wrap is dependent on ATP binding by UvrB and probably causes local melting of the DNA helix, facilitating insertion of UvrB beta-hairpin between the DNA strands. Then UvrB probes one DNA strand for the presence of a lesion. If a lesion is found the UvrA subunits dissociate and the UvrB-DNA preincision complex is formed. This complex is subsequently bound by UvrC and the second UvrB is released. If no lesion is found, the DNA wraps around the other UvrB subunit that will check the other stand for damage. The sequence is that of UvrABC system protein B from Prochlorococcus marinus (strain MIT 9301).